Here is a 359-residue protein sequence, read N- to C-terminus: Protein trichome birefringence-like 42 (359 aa).

The helical; Signal-anchor for type II membrane protein transmembrane segment at 7–25 threads the bilayer; the sequence is LFLLLLIFLVDLSDYGVLA. The GDS motif motif lies at 110 to 112; it reads GDS. A DCXHWCLPGXXDXWN motif motif is present at residues 335–349; that stretch reads DCSHWCLPGVPDAWN.

This sequence belongs to the PC-esterase family. TBL subfamily.

The protein localises to the membrane. In terms of biological role, may act as a bridging protein that binds pectin and other cell wall polysaccharides. Probably involved in maintaining esterification of pectins. May be involved in the specific O-acetylation of cell wall polymers. The polypeptide is Protein trichome birefringence-like 42 (TBL42) (Arabidopsis thaliana (Mouse-ear cress)).